The primary structure comprises 162 residues: MALNLQDKKAIVAEVNEAASGALSAVVADSRGVEVGAMTSLRKQAREAGVYMKVVRNTLARRAVQGTDYECLTDTFTGPTLIAFSNEHPGAAARLFKDFAKENKDFEIKAAAFEGALTDAEVLATLPTYDEAIARLMMCMKEASAGKLVRTIAAIRDQKEAA.

The protein belongs to the universal ribosomal protein uL10 family. In terms of assembly, part of the ribosomal stalk of the 50S ribosomal subunit. The N-terminus interacts with L11 and the large rRNA to form the base of the stalk. The C-terminus forms an elongated spine to which L12 dimers bind in a sequential fashion forming a multimeric L10(L12)X complex.

In terms of biological role, forms part of the ribosomal stalk, playing a central role in the interaction of the ribosome with GTP-bound translation factors. This chain is Large ribosomal subunit protein uL10, found in Vibrio parahaemolyticus serotype O3:K6 (strain RIMD 2210633).